We begin with the raw amino-acid sequence, 549 residues long: Oxygen-dependent choline dehydrogenase (549 aa).

FAD is bound at residue 4–33 (DFVIIGSGSAGSALAYRLSEDGKNSVLVIE). The active-site Proton acceptor is H465.

This sequence belongs to the GMC oxidoreductase family. The cofactor is FAD.

It carries out the reaction choline + A = betaine aldehyde + AH2. The catalysed reaction is betaine aldehyde + NAD(+) + H2O = glycine betaine + NADH + 2 H(+). Its pathway is amine and polyamine biosynthesis; betaine biosynthesis via choline pathway; betaine aldehyde from choline (cytochrome c reductase route): step 1/1. Involved in the biosynthesis of the osmoprotectant glycine betaine. Catalyzes the oxidation of choline to betaine aldehyde and betaine aldehyde to glycine betaine at the same rate. This is Oxygen-dependent choline dehydrogenase from Rhizobium etli (strain CIAT 652).